We begin with the raw amino-acid sequence, 321 residues long: Thioredoxin reductase (321 aa).

Residues 11-14 (SGPA), 40-41 (TA), Gln45, Asn54, Cys145, Asp288, and 295-297 (RQA) contribute to the FAD site. Cys142 and Cys145 form a disulfide bridge.

This sequence belongs to the class-II pyridine nucleotide-disulfide oxidoreductase family. Homodimer. It depends on FAD as a cofactor.

It localises to the cytoplasm. It carries out the reaction [thioredoxin]-dithiol + NADP(+) = [thioredoxin]-disulfide + NADPH + H(+). The protein is Thioredoxin reductase (TRR1) of Debaryomyces hansenii (strain ATCC 36239 / CBS 767 / BCRC 21394 / JCM 1990 / NBRC 0083 / IGC 2968) (Yeast).